Consider the following 514-residue polypeptide: MDLSTSGSLPCHLPLSLLTNLQTPPIDTSFSSPPATSSSSLLSPSPSSAFRPVVPKSLMNPQPAMDTFYMSAIQSLVVSTTNDDQYSEHGALEGSKSLAKDENASTSAGTILCQVCSDKASGFHYGVFACEGCKGFFRRSIQQKITYRACTRAEDCLILRNNRNRCQCCRLKKCLAVGMSRDAVRFGRVPKREKARMFEEMQKTNVQSQRDQIAIQYENLTEVMHKINQAFGTLQATLEKCTGPIYTDRCPITSNFIVIPLKAAIDFANSIPAFLSITQTQRVHLLQNSVFDVMLLASASASTSQHFPPGGLTYDQSSANPIIPQAIQSISARIRQLPPQTVPILTAIAVCQADLLPESQQPMLLAERLWCVLGKLGGIQSLATAPSLLADVRTLRQWHSDRLRQMSQISQHFSQNLLIAPVAAAAPVLLPPAFLSPPASATSTSSSSVKSEFIERHPSIASLLERPRRISSSGAQEPLNLSLPHVRHQVKRDVDSDEQLEEMKVSPVPTTLSE.

The segment at 28–48 (TSFSSPPATSSSSLLSPSPSS) is disordered. A DNA-binding region (nuclear receptor) is located at residues 110–186 (TILCQVCSDK…VGMSRDAVRF (77 aa)). NR C4-type zinc fingers lie at residues 113-133 (CQVC…CEGC) and 150-174 (CTRA…LKKC). In terms of domain architecture, NR LBD spans 216–514 (QYENLTEVMH…VSPVPTTLSE (299 aa)). Positions 465–514 (ERPRRISSSGAQEPLNLSLPHVRHQVKRDVDSDEQLEEMKVSPVPTTLSE) are disordered.

Belongs to the nuclear hormone receptor family.

Its subcellular location is the nucleus. Functionally, orphan nuclear receptor. This chain is Nuclear hormone receptor family member nhr-85 (nhr-85), found in Caenorhabditis elegans.